Consider the following 176-residue polypeptide: 3-hydroxydecanoyl-[acyl-carrier-protein] dehydratase (176 aa).

Histidine 71 is a catalytic residue.

The protein belongs to the thioester dehydratase family. FabA subfamily. As to quaternary structure, homodimer.

It is found in the cytoplasm. The enzyme catalyses a (3R)-hydroxyacyl-[ACP] = a (2E)-enoyl-[ACP] + H2O. It carries out the reaction (3R)-hydroxydecanoyl-[ACP] = (2E)-decenoyl-[ACP] + H2O. The catalysed reaction is (2E)-decenoyl-[ACP] = (3Z)-decenoyl-[ACP]. The protein operates within lipid metabolism; fatty acid biosynthesis. Necessary for the introduction of cis unsaturation into fatty acids. Catalyzes the dehydration of (3R)-3-hydroxydecanoyl-ACP to E-(2)-decenoyl-ACP and then its isomerization to Z-(3)-decenoyl-ACP. Can catalyze the dehydratase reaction for beta-hydroxyacyl-ACPs with saturated chain lengths up to 16:0, being most active on intermediate chain length. The chain is 3-hydroxydecanoyl-[acyl-carrier-protein] dehydratase from Rhodopseudomonas palustris (strain BisA53).